Reading from the N-terminus, the 186-residue chain is MAVARTGVLGVQWLQRASWNMMPLGARTASHMTKDMFPGPYPRTPEERAAAAKKYNMRVEDYEPYPDDGMGYGDYPKLPDRSQHERDPWYSWDQPDLRLNWGEPMHWHLDMFNRNRVDTSPIPVSWNVMCMQLFGFLAFMIFMCWVGEVYPVYQPVGPKQYPYNNLYLERGGDPSKEPERVVHYEI.

The N-terminal 28 residues, 1-28, are a transit peptide targeting the mitochondrion; sequence MAVARTGVLGVQWLQRASWNMMPLGART. A helical transmembrane segment spans residues 133–153; that stretch reads LFGFLAFMIFMCWVGEVYPVY.

Belongs to the complex I NDUFB8 subunit family. In terms of assembly, complex I is composed of 45 different subunits.

It is found in the mitochondrion inner membrane. Its function is as follows. Accessory subunit of the mitochondrial membrane respiratory chain NADH dehydrogenase (Complex I), that is believed not to be involved in catalysis. Complex I functions in the transfer of electrons from NADH to the respiratory chain. The immediate electron acceptor for the enzyme is believed to be ubiquinone. This Pongo pygmaeus (Bornean orangutan) protein is NADH dehydrogenase [ubiquinone] 1 beta subcomplex subunit 8, mitochondrial (NDUFB8).